We begin with the raw amino-acid sequence, 162 residues long: uncharacterized protein (162 aa).

The chain crosses the membrane as a helical span at residues 5-25; sequence IIILFLFTAILCSITLCGCIS.

It localises to the membrane. This is an uncharacterized protein from Methanocaldococcus jannaschii (strain ATCC 43067 / DSM 2661 / JAL-1 / JCM 10045 / NBRC 100440) (Methanococcus jannaschii).